The sequence spans 411 residues: Arginine deiminase (411 aa).

The active-site Amidino-cysteine intermediate is the Cys-401.

The protein belongs to the arginine deiminase family.

It localises to the cytoplasm. It carries out the reaction L-arginine + H2O = L-citrulline + NH4(+). The protein operates within amino-acid degradation; L-arginine degradation via ADI pathway; carbamoyl phosphate from L-arginine: step 1/2. This chain is Arginine deiminase, found in Staphylococcus aureus (strain MRSA252).